Consider the following 125-residue polypeptide: Large ribosomal subunit protein eL31 (125 aa).

Residue Met-1 is modified to N-acetylmethionine. Ser-15 is modified (phosphoserine). Residues Lys-55 and Lys-70 each carry the N6-succinyllysine modification. Lys-75 carries the N6-acetyllysine; alternate modification. Lys-75 carries the N6-succinyllysine; alternate modification. Position 98 is a phosphoserine (Ser-98).

It belongs to the eukaryotic ribosomal protein eL31 family. Component of the large ribosomal subunit.

It is found in the cytoplasm. Functionally, component of the large ribosomal subunit. The ribosome is a large ribonucleoprotein complex responsible for the synthesis of proteins in the cell. The polypeptide is Large ribosomal subunit protein eL31 (RPL31) (Oryctolagus cuniculus (Rabbit)).